The primary structure comprises 200 residues: MSKYAGIVLAGGMSSRFGEPKALASWQGSTFIEHILKVMTSTLQEVVVISHSDIKEPVEKLVQVPVIEDIPHYKGNGPLAGIVSGMEYIEADWYAIMPCDAPNVSHEWFTILLGQTSNEYDAVVPIINGRKQPLLAAYHNRVKEKIYALLQEEKRSMVQLLSQCNVKYIAGEDVQANADWFINVNTKEEYVQAQKDLSNE.

GTP-binding positions include Leu9–Gly11, Lys21, Asp69, and Asp100. Asp100 is a binding site for Mg(2+).

The protein belongs to the MobA family. The cofactor is Mg(2+).

Its subcellular location is the cytoplasm. The catalysed reaction is Mo-molybdopterin + GTP + H(+) = Mo-molybdopterin guanine dinucleotide + diphosphate. Functionally, transfers a GMP moiety from GTP to Mo-molybdopterin (Mo-MPT) cofactor (Moco or molybdenum cofactor) to form Mo-molybdopterin guanine dinucleotide (Mo-MGD) cofactor. The polypeptide is Probable molybdenum cofactor guanylyltransferase (Bacillus cereus (strain ZK / E33L)).